Consider the following 215-residue polypeptide: Oligoribonuclease (215 aa).

An Exonuclease domain is found at 5-170 (LVWIDCEMTG…ADIHESIREL (166 aa)). Tyrosine 127 is an active-site residue. The tract at residues 196–215 (LDEGKDAPGPSDSASAPPTG) is disordered. The segment covering 202–215 (APGPSDSASAPPTG) has biased composition (low complexity).

Belongs to the oligoribonuclease family.

The protein localises to the cytoplasm. Functionally, 3'-to-5' exoribonuclease specific for small oligoribonucleotides. This chain is Oligoribonuclease, found in Mycobacterium avium (strain 104).